The sequence spans 199 residues: Holliday junction branch migration complex subunit RuvA (199 aa).

Positions 1 to 64 (MIALLTGKLA…EDAINLYGFR (64 aa)) are domain I. The tract at residues 65 to 143 (TMEEKEMFQL…KLGHGPLQQD (79 aa)) is domain II. The tract at residues 144-148 (VAPAD) is flexible linker. The domain III stretch occupies residues 149-199 (AHNDMRDDVVSALVNLGYKEAVVQKTVDEIGVAADATVESLLKQALKKLMK).

It belongs to the RuvA family. As to quaternary structure, homotetramer. Forms an RuvA(8)-RuvB(12)-Holliday junction (HJ) complex. HJ DNA is sandwiched between 2 RuvA tetramers; dsDNA enters through RuvA and exits via RuvB. An RuvB hexamer assembles on each DNA strand where it exits the tetramer. Each RuvB hexamer is contacted by two RuvA subunits (via domain III) on 2 adjacent RuvB subunits; this complex drives branch migration. In the full resolvosome a probable DNA-RuvA(4)-RuvB(12)-RuvC(2) complex forms which resolves the HJ.

Its subcellular location is the cytoplasm. Functionally, the RuvA-RuvB-RuvC complex processes Holliday junction (HJ) DNA during genetic recombination and DNA repair, while the RuvA-RuvB complex plays an important role in the rescue of blocked DNA replication forks via replication fork reversal (RFR). RuvA specifically binds to HJ cruciform DNA, conferring on it an open structure. The RuvB hexamer acts as an ATP-dependent pump, pulling dsDNA into and through the RuvAB complex. HJ branch migration allows RuvC to scan DNA until it finds its consensus sequence, where it cleaves and resolves the cruciform DNA. This chain is Holliday junction branch migration complex subunit RuvA, found in Geotalea daltonii (strain DSM 22248 / JCM 15807 / FRC-32) (Geobacter daltonii).